A 262-amino-acid polypeptide reads, in one-letter code: Hydroxyethylthiazole kinase (262 aa).

Position 50 (M50) interacts with substrate. ATP contacts are provided by R125 and T171. G198 contacts substrate.

Belongs to the Thz kinase family. The cofactor is Mg(2+).

The enzyme catalyses 5-(2-hydroxyethyl)-4-methylthiazole + ATP = 4-methyl-5-(2-phosphooxyethyl)-thiazole + ADP + H(+). Its pathway is cofactor biosynthesis; thiamine diphosphate biosynthesis; 4-methyl-5-(2-phosphoethyl)-thiazole from 5-(2-hydroxyethyl)-4-methylthiazole: step 1/1. Its function is as follows. Catalyzes the phosphorylation of the hydroxyl group of 4-methyl-5-beta-hydroxyethylthiazole (THZ). This Escherichia coli O6:K15:H31 (strain 536 / UPEC) protein is Hydroxyethylthiazole kinase.